The following is a 618-amino-acid chain: Paraneoplastic antigen-like protein 5 (618 aa).

The span at 390–399 shows a compositional bias: basic and acidic residues; that stretch reads AGEEGQRKES. Disordered regions lie at residues 390-409, 451-475, and 519-549; these read AGEE…EPDE, RDTL…EGQQ, and SMIT…ELRM.

This sequence belongs to the PNMA family. As to expression, restricted to testis, where expression is low. Not detected in the brain.

The protein localises to the nucleus. The sequence is that of Paraneoplastic antigen-like protein 5 (Pnma5) from Mus musculus (Mouse).